Here is a 307-residue protein sequence, read N- to C-terminus: Methionyl-tRNA formyltransferase (307 aa).

108–111 is a binding site for (6S)-5,6,7,8-tetrahydrofolate; the sequence is SLLP.

This sequence belongs to the Fmt family.

The catalysed reaction is L-methionyl-tRNA(fMet) + (6R)-10-formyltetrahydrofolate = N-formyl-L-methionyl-tRNA(fMet) + (6S)-5,6,7,8-tetrahydrofolate + H(+). In terms of biological role, attaches a formyl group to the free amino group of methionyl-tRNA(fMet). The formyl group appears to play a dual role in the initiator identity of N-formylmethionyl-tRNA by promoting its recognition by IF2 and preventing the misappropriation of this tRNA by the elongation apparatus. The chain is Methionyl-tRNA formyltransferase from Xylella fastidiosa (strain M12).